The sequence spans 82 residues: Small ribosomal subunit protein bS18 (82 aa).

Positions 1-25 (MKRNNMKRARMEQSRRPKKNPLKAE) are disordered.

This sequence belongs to the bacterial ribosomal protein bS18 family. In terms of assembly, part of the 30S ribosomal subunit. Forms a tight heterodimer with protein bS6.

In terms of biological role, binds as a heterodimer with protein bS6 to the central domain of the 16S rRNA, where it helps stabilize the platform of the 30S subunit. This chain is Small ribosomal subunit protein bS18, found in Corynebacterium urealyticum (strain ATCC 43042 / DSM 7109).